A 479-amino-acid chain; its full sequence is Poly(A) polymerase catalytic subunit (479 aa).

Catalysis depends on residues Asp-202 and Asp-204. Ca(2+) is bound by residues Asp-202, Asp-204, and Asp-253.

The protein belongs to the poxviridae poly(A) polymerase catalytic subunit family. In terms of assembly, heterodimer of a large (catalytic) subunit and a small (regulatory) subunit.

It carries out the reaction RNA(n) + ATP = RNA(n)-3'-adenine ribonucleotide + diphosphate. In terms of biological role, polymerase that creates the 3'-poly(A) tail of mRNA's. The polypeptide is Poly(A) polymerase catalytic subunit (OPG063) (Homo sapiens (Human)).